The primary structure comprises 930 residues: Kinesin-like protein KIN-7J (930 aa).

The 265-residue stretch at 9–273 (KILVSVRVRP…TLGTVIRKLR (265 aa)) folds into the Kinesin motor domain. Position 95–102 (95–102 (GQTSSGKT)) interacts with ATP. Disordered stretches follow at residues 449–569 (LKNS…IGTD) and 655–686 (MQTK…SLKD). Over residues 459 to 468 (SVEAQESQES) the composition is skewed to low complexity. Composition is skewed to basic and acidic residues over residues 473–482 (EQMKNEERKM) and 533–558 (AKLD…KDCN). A compositionally biased stretch (low complexity) spans 666–681 (TSSISFDSGSSTSIDT). Residue Lys-805 forms a Glycyl lysine isopeptide (Lys-Gly) (interchain with G-Cter in ubiquitin) linkage.

It belongs to the TRAFAC class myosin-kinesin ATPase superfamily. Kinesin family. KIN-7 subfamily.

In Arabidopsis thaliana (Mouse-ear cress), this protein is Kinesin-like protein KIN-7J.